The sequence spans 802 residues: Phenylalanine--tRNA ligase beta subunit (802 aa).

In terms of domain architecture, tRNA-binding spans 39–150; the sequence is AKALKPFTIA…ADAPIGAAYA (112 aa). Residues 400–475 form the B5 domain; it reads GDDRVIDFPV…RIYGVDKVPM (76 aa). Residues Asp453, Asp459, Glu462, and Glu463 each contribute to the Mg(2+) site. The 94-residue stretch at 708–801 folds into the FDX-ACB domain; that stretch reads SAFQPVSRDF…VTKKTGGTLR (94 aa).

This sequence belongs to the phenylalanyl-tRNA synthetase beta subunit family. Type 1 subfamily. As to quaternary structure, tetramer of two alpha and two beta subunits. It depends on Mg(2+) as a cofactor.

The protein localises to the cytoplasm. The catalysed reaction is tRNA(Phe) + L-phenylalanine + ATP = L-phenylalanyl-tRNA(Phe) + AMP + diphosphate + H(+). The protein is Phenylalanine--tRNA ligase beta subunit of Bradyrhizobium diazoefficiens (strain JCM 10833 / BCRC 13528 / IAM 13628 / NBRC 14792 / USDA 110).